The sequence spans 364 residues: uncharacterized protein (364 aa).

This is an uncharacterized protein from Escherichia coli (strain K12).